We begin with the raw amino-acid sequence, 872 residues long: Probable cation-transporting P-type ATPase (872 aa).

The Cytoplasmic portion of the chain corresponds to 1–41 (MNKWTGLSAAAVLESRAQHGANLIPTKKLTPFWLLFLEQFK). The helical transmembrane segment at 42–62 (SLVVILLLVATILSLVVAIIS) threads the bilayer. Over 63-79 (GVNANWLFDHNLVIEWT) the chain is Extracellular. The helical transmembrane segment at 80–100 (QPFVILITVLANSLIGSIQEF) threads the bilayer. Residues 101 to 237 (KAQKSAHTLK…TKLSPLQQKL (137 aa)) are Cytoplasmic-facing. The helical transmembrane segment at 238–257 (EKVGKWFSWFGLGLFVVVFL) threads the bilayer. Residues 258–275 (VQLGLLGFHNFSANWSIA) lie on the Extracellular side of the membrane. Residues 276–293 (LIGAIALVVAIIPEGLVT) traverse the membrane as a helical segment. Residues 294 to 642 (FINVIFALSV…EQGRKTFLTC (349 aa)) lie on the Cytoplasmic side of the membrane. D331 acts as the 4-aspartylphosphate intermediate in catalysis. Mg(2+)-binding residues include D587 and D591. The chain crosses the membrane as a helical span at residues 643–662 (KRVLFNLFLTSIAGTIVVLL). The Extracellular portion of the chain corresponds to 663-685 (GLFVLGEVFREQLSKANHNFQVF). A helical membrane pass occupies residues 686–706 (TPTQLLIINLFVHGFPAVALA). At 707–724 (IQPVQEKLMLKPFSTKNL) the chain is on the cytoplasmic side. The helical transmembrane segment at 725 to 747 (FYNRGGFDLIWQSLLLSFLTLLF) threads the bilayer. The Extracellular segment spans residues 748–768 (YSLGMVYAINDPELGKSGDLI). A helical membrane pass occupies residues 769-788 (NRAGATCGFMVLGGSAALNS). At 789–801 (LNLMVDRPLVATN) the chain is on the cytoplasmic side. A helical transmembrane segment spans residues 802 to 824 (PKHYGIVWLGALSSIFVFLLIIF). The Extracellular segment spans residues 825–842 (INPLGLVFSTLKDLTAHP). A helical membrane pass occupies residues 843-863 (VLIGYSFGGVLLYMTINEVVK). Residues 864–872 (LIRLSYGSV) are Cytoplasmic-facing.

Belongs to the cation transport ATPase (P-type) (TC 3.A.3) family. Type II subfamily.

Its subcellular location is the cell membrane. It catalyses the reaction ATP + H2O = ADP + phosphate + H(+). Functionally, could mediate calcium influx. The protein is Probable cation-transporting P-type ATPase (pacL) of Mycoplasma pneumoniae (strain ATCC 29342 / M129 / Subtype 1) (Mycoplasmoides pneumoniae).